We begin with the raw amino-acid sequence, 249 residues long: 3-deoxy-D-manno-octulosonic acid kinase (249 aa).

The active site involves aspartate 175.

It belongs to the protein kinase superfamily. KdkA/RfaP family.

It is found in the cell inner membrane. The enzyme catalyses an alpha-Kdo-(2-&gt;6)-lipid IVA + ATP = a 4-O-phospho-alpha-Kdo-(2-&gt;6)-lipid IVA + ADP + H(+). It functions in the pathway bacterial outer membrane biogenesis; LPS core biosynthesis. Its function is as follows. Catalyzes the ATP-dependent phosphorylation of the 3-deoxy-D-manno-octulosonic acid (Kdo) residue in Kdo-lipid IV(A) at the 4-OH position. In Xanthomonas campestris pv. campestris (strain 8004), this protein is 3-deoxy-D-manno-octulosonic acid kinase.